A 176-amino-acid chain; its full sequence is Shikimate kinase (176 aa).

14-19 lines the ATP pocket; the sequence is GAGKST. Ser18 serves as a coordination point for Mg(2+). Positions 36, 60, and 83 each coordinate substrate. Arg121 contributes to the ATP binding site. Position 140 (Arg140) interacts with substrate.

This sequence belongs to the shikimate kinase family. Monomer. The cofactor is Mg(2+).

Its subcellular location is the cytoplasm. The enzyme catalyses shikimate + ATP = 3-phosphoshikimate + ADP + H(+). Its pathway is metabolic intermediate biosynthesis; chorismate biosynthesis; chorismate from D-erythrose 4-phosphate and phosphoenolpyruvate: step 5/7. Functionally, catalyzes the specific phosphorylation of the 3-hydroxyl group of shikimic acid using ATP as a cosubstrate. The protein is Shikimate kinase of Francisella tularensis subsp. holarctica (strain FTNF002-00 / FTA).